Reading from the N-terminus, the 132-residue chain is Small ribosomal subunit protein uS8 (132 aa).

It belongs to the universal ribosomal protein uS8 family. In terms of assembly, part of the 30S ribosomal subunit. Contacts proteins S5 and S12.

In terms of biological role, one of the primary rRNA binding proteins, it binds directly to 16S rRNA central domain where it helps coordinate assembly of the platform of the 30S subunit. The chain is Small ribosomal subunit protein uS8 from Alkaliphilus oremlandii (strain OhILAs) (Clostridium oremlandii (strain OhILAs)).